Reading from the N-terminus, the 273-residue chain is Phosphate import ATP-binding protein PstB (273 aa).

The region spanning 19-258 (ISIQNVTISY…FNETEKIFNS (240 aa)) is the ABC transporter domain. Residue 51-58 (GPSGCGKS) participates in ATP binding.

The protein belongs to the ABC transporter superfamily. Phosphate importer (TC 3.A.1.7) family. In terms of assembly, the complex is composed of two ATP-binding proteins (PstB), two transmembrane proteins (PstC and PstA) and a solute-binding protein (PstS).

The protein localises to the cell inner membrane. It carries out the reaction phosphate(out) + ATP + H2O = ADP + 2 phosphate(in) + H(+). Part of the ABC transporter complex PstSACB involved in phosphate import. Responsible for energy coupling to the transport system. In Parasynechococcus marenigrum (strain WH8102), this protein is Phosphate import ATP-binding protein PstB.